A 545-amino-acid chain; its full sequence is Esterase-5C (545 aa).

The signal sequence occupies residues methionine 1–alanine 19. Cysteine 84 and cysteine 103 are joined by a disulfide. The N-linked (GlcNAc...) asparagine glycan is linked to asparagine 113. Serine 207 functions as the Acyl-ester intermediate in the catalytic mechanism. Cysteine 259 and cysteine 271 are joined by a disulfide. N-linked (GlcNAc...) asparagine glycosylation is present at asparagine 421. The active-site Charge relay system is histidine 467. N-linked (GlcNAc...) asparagine glycosylation occurs at asparagine 507. Cysteine 515 and cysteine 536 are joined by a disulfide.

This sequence belongs to the type-B carboxylesterase/lipase family.

It localises to the secreted. The catalysed reaction is a carboxylic ester + H2O = an alcohol + a carboxylate + H(+). The chain is Esterase-5C (Est-5C) from Drosophila pseudoobscura pseudoobscura (Fruit fly).